A 390-amino-acid polypeptide reads, in one-letter code: Elongation factor Tu 2 (390 aa).

The tr-type G domain occupies 10–203; the sequence is KPHLNIGTMG…AVDTYVPMPE (194 aa). The tract at residues 19–26 is G1; sequence GHVDHGKT. 19-26 provides a ligand contact to GTP; it reads GHVDHGKT. T26 is a binding site for Mg(2+). Residues 60-64 are G2; it reads GITIN. The segment at 81-84 is G3; that stretch reads DMPG. GTP contacts are provided by residues 81-85 and 136-139; these read DMPGH and NKAD. The G4 stretch occupies residues 136 to 139; sequence NKAD. Positions 173-175 are G5; sequence SGL.

The protein belongs to the TRAFAC class translation factor GTPase superfamily. Classic translation factor GTPase family. EF-Tu/EF-1A subfamily. As to quaternary structure, monomer.

It localises to the cytoplasm. It carries out the reaction GTP + H2O = GDP + phosphate + H(+). GTP hydrolase that promotes the GTP-dependent binding of aminoacyl-tRNA to the A-site of ribosomes during protein biosynthesis. The chain is Elongation factor Tu 2 from Streptomyces avermitilis (strain ATCC 31267 / DSM 46492 / JCM 5070 / NBRC 14893 / NCIMB 12804 / NRRL 8165 / MA-4680).